The sequence spans 507 residues: ATP synthase subunit alpha, chloroplastic (507 aa).

170–177 provides a ligand contact to ATP; it reads GDRQTGKT.

It belongs to the ATPase alpha/beta chains family. F-type ATPases have 2 components, CF(1) - the catalytic core - and CF(0) - the membrane proton channel. CF(1) has five subunits: alpha(3), beta(3), gamma(1), delta(1), epsilon(1). CF(0) has four main subunits: a, b, b' and c.

It localises to the plastid. Its subcellular location is the chloroplast thylakoid membrane. It carries out the reaction ATP + H2O + 4 H(+)(in) = ADP + phosphate + 5 H(+)(out). In terms of biological role, produces ATP from ADP in the presence of a proton gradient across the membrane. The alpha chain is a regulatory subunit. This chain is ATP synthase subunit alpha, chloroplastic, found in Silene latifolia (White campion).